Reading from the N-terminus, the 188-residue chain is HGPRTase-like protein 1 (188 aa).

This sequence belongs to the purine/pyrimidine phosphoribosyltransferase family. Archaeal HPRT subfamily.

In terms of biological role, may catalyze a purine salvage reaction, the substrate is unknown. The polypeptide is HGPRTase-like protein 1 (Haloferax volcanii (strain ATCC 29605 / DSM 3757 / JCM 8879 / NBRC 14742 / NCIMB 2012 / VKM B-1768 / DS2) (Halobacterium volcanii)).